Reading from the N-terminus, the 543-residue chain is ADP,ATP carrier protein 3 (543 aa).

10 helical membrane-spanning segments follow: residues 46–66, 86–106, 111–131, 175–195, 209–229, 243–263, 306–326, 346–366, 382–402, and 504–524; these read VLYL…MGNL, IFLP…LSLF, MFDI…LVVW, FLFL…FNIF, ISVY…LTLV, ELGF…ILAL, LLIA…LVEA, FANF…LVVI, LASL…LIAF, and SVSG…LKYL.

This sequence belongs to the ADP/ATP translocase tlc family.

It is found in the mitosome membrane. Functionally, ATP transporter involved in the uptake of ATP from the parasite cell cytoplasm into the mitosome matrix. Equilibrates nucleotide pools across a concentration gradient between both sides of the mitosome membrane. The protein is ADP,ATP carrier protein 3 (NTT3) of Encephalitozoon cuniculi (strain GB-M1) (Microsporidian parasite).